Consider the following 453-residue polypeptide: MKRVVLTGTGSGVGKTTIATGIMKALSDEHKIQPFKVGPDYIDPSYHNCATGVSSRNLDSFFMSDGQIRQSFKNGMTSSHADYGIIEGVRGLYEGISPTNDIGSTSSIAKALNSPVILIINSRSLVRSAAAMTLGFKALDSRIDIEGVILNNVKSQKHYLKTKEAVEKLANTRVLGGIERDNSISMEQRHLGLIPAVEQERISGLVEKWGELIRENIDLDALMEIMDNSNPIINEYEPIWSPNKTKHKTRIAVPFDEAFNFYYKENLEALEYNNAKIEYFSPIHDEQLPSVDALYIGGGYPEIFKKELSKNTTMLESIKEFSQDNHPIYAECGGLMYLCKTIDSLPMVDVFPYHSMLTKRVQGLSYTIAHVQRDNPILKKNTTYHGHEFHYSKVEYTGSNSNDFAFSMRRGVGITGKYDGLLKNNTLASYIHTHTACLPDFGYNFTQSAYENK.

In terms of domain architecture, GATase cobBQ-type spans 250–440 (RIAVPFDEAF…IHTHTACLPD (191 aa)). Residue Cys332 is the Nucleophile of the active site.

The protein belongs to the CobB/CbiA family. Mg(2+) serves as cofactor.

It catalyses the reaction cob(II)yrinate + 2 L-glutamine + 2 ATP + 2 H2O = cob(II)yrinate a,c diamide + 2 L-glutamate + 2 ADP + 2 phosphate + 2 H(+). The enzyme catalyses Ni-sirohydrochlorin + 2 L-glutamine + 2 ATP + 2 H2O = Ni-sirohydrochlorin a,c-diamide + 2 L-glutamate + 2 ADP + 2 phosphate + 2 H(+). It functions in the pathway cofactor biosynthesis; adenosylcobalamin biosynthesis; cob(II)yrinate a,c-diamide from sirohydrochlorin (anaerobic route): step 10/10. In terms of biological role, catalyzes the ATP-dependent amidation of the two carboxylate groups at positions a and c of cobyrinate, using either L-glutamine or ammonia as the nitrogen source. Involved in the biosynthesis of the unique nickel-containing tetrapyrrole coenzyme F430, the prosthetic group of methyl-coenzyme M reductase (MCR), which plays a key role in methanogenesis and anaerobic methane oxidation. Catalyzes the ATP-dependent amidation of the two carboxylate groups at positions a and c of Ni-sirohydrochlorin, using L-glutamine or ammonia as the nitrogen source. In Methanosphaera stadtmanae (strain ATCC 43021 / DSM 3091 / JCM 11832 / MCB-3), this protein is Cobyrinate a,c-diamide synthase.